The primary structure comprises 305 residues: Sulfate adenylyltransferase subunit 2 (305 aa).

Belongs to the PAPS reductase family. CysD subfamily. As to quaternary structure, heterodimer composed of CysD, the smaller subunit, and CysN.

The catalysed reaction is sulfate + ATP + H(+) = adenosine 5'-phosphosulfate + diphosphate. The protein operates within sulfur metabolism; hydrogen sulfide biosynthesis; sulfite from sulfate: step 1/3. In terms of biological role, with CysN forms the ATP sulfurylase (ATPS) that catalyzes the adenylation of sulfate producing adenosine 5'-phosphosulfate (APS) and diphosphate, the first enzymatic step in sulfur assimilation pathway. APS synthesis involves the formation of a high-energy phosphoric-sulfuric acid anhydride bond driven by GTP hydrolysis by CysN coupled to ATP hydrolysis by CysD. The sequence is that of Sulfate adenylyltransferase subunit 2 from Myxococcus xanthus (strain DK1622).